Here is a 1228-residue protein sequence, read N- to C-terminus: DNA-directed RNA polymerase subunit beta (1228 aa).

This sequence belongs to the RNA polymerase beta chain family. The RNAP catalytic core consists of 2 alpha, 1 beta, 1 beta' and 1 omega subunit. When a sigma factor is associated with the core the holoenzyme is formed, which can initiate transcription.

It carries out the reaction RNA(n) + a ribonucleoside 5'-triphosphate = RNA(n+1) + diphosphate. Functionally, DNA-dependent RNA polymerase catalyzes the transcription of DNA into RNA using the four ribonucleoside triphosphates as substrates. The polypeptide is DNA-directed RNA polymerase subunit beta (Leptospira biflexa serovar Patoc (strain Patoc 1 / Ames)).